Reading from the N-terminus, the 379-residue chain is Alkanesulfonate monooxygenase (379 aa).

It belongs to the SsuD family.

The catalysed reaction is an alkanesulfonate + FMNH2 + O2 = an aldehyde + FMN + sulfite + H2O + 2 H(+). Its function is as follows. Catalyzes the desulfonation of aliphatic sulfonates. The chain is Alkanesulfonate monooxygenase from Sorangium cellulosum (strain So ce56) (Polyangium cellulosum (strain So ce56)).